The primary structure comprises 319 residues: Acetyl-coenzyme A carboxylase carboxyl transferase subunit alpha (319 aa).

The CoA carboxyltransferase C-terminal domain maps to D35–E296.

This sequence belongs to the AccA family. In terms of assembly, acetyl-CoA carboxylase is a heterohexamer composed of biotin carboxyl carrier protein (AccB), biotin carboxylase (AccC) and two subunits each of ACCase subunit alpha (AccA) and ACCase subunit beta (AccD).

It localises to the cytoplasm. The enzyme catalyses N(6)-carboxybiotinyl-L-lysyl-[protein] + acetyl-CoA = N(6)-biotinyl-L-lysyl-[protein] + malonyl-CoA. Its pathway is lipid metabolism; malonyl-CoA biosynthesis; malonyl-CoA from acetyl-CoA: step 1/1. In terms of biological role, component of the acetyl coenzyme A carboxylase (ACC) complex. First, biotin carboxylase catalyzes the carboxylation of biotin on its carrier protein (BCCP) and then the CO(2) group is transferred by the carboxyltransferase to acetyl-CoA to form malonyl-CoA. The protein is Acetyl-coenzyme A carboxylase carboxyl transferase subunit alpha of Vibrio atlanticus (strain LGP32) (Vibrio splendidus (strain Mel32)).